The primary structure comprises 177 residues: Small ribosomal subunit protein uS5 (177 aa).

An S5 DRBM domain is found at 19-82 (FIEKLVAIKR…DQAQKQMIKV (64 aa)).

It belongs to the universal ribosomal protein uS5 family. As to quaternary structure, part of the 30S ribosomal subunit. Contacts proteins S4 and S8.

Functionally, with S4 and S12 plays an important role in translational accuracy. Located at the back of the 30S subunit body where it stabilizes the conformation of the head with respect to the body. The chain is Small ribosomal subunit protein uS5 from Magnetococcus marinus (strain ATCC BAA-1437 / JCM 17883 / MC-1).